The following is a 435-amino-acid chain: 5-hydroxybenzimidazole synthase (435 aa).

Substrate contacts are provided by residues methionine 95, tyrosine 124, histidine 163, 186-188 (SKG), 227-230 (NGLR), and glutamate 266. Histidine 270 contacts Zn(2+). A substrate-binding site is contributed by tyrosine 293. Histidine 334 is a Zn(2+) binding site. Cysteine 410, cysteine 413, and cysteine 417 together coordinate [4Fe-4S] cluster.

It belongs to the ThiC family. 5-hydroxybenzimidazole synthase subfamily. Homodimer. [4Fe-4S] cluster serves as cofactor.

It catalyses the reaction 5-amino-1-(5-phospho-beta-D-ribosyl)imidazole + AH2 + S-adenosyl-L-methionine = 5-hydroxybenzimidazole + 5'-deoxyadenosine + formate + L-methionine + A + NH4(+) + phosphate + 2 H(+). In terms of biological role, catalyzes the conversion of aminoimidazole ribotide (AIR) to 5-hydroxybenzimidazole (5-HBI) in a radical S-adenosyl-L-methionine (SAM)-dependent reaction. Is thus involved in the anaerobic biosynthesis of the benzimidazole lower axial ligand of the cobamide produced by G.metallireducens. This chain is 5-hydroxybenzimidazole synthase, found in Geobacter metallireducens (strain ATCC 53774 / DSM 7210 / GS-15).